An 867-amino-acid chain; its full sequence is Probable beta-glucosidase A (867 aa).

Residues 1-18 (MRFSWLEVAVTAASLANA) form the signal peptide. Residues N67, N218, and N259 are each glycosylated (N-linked (GlcNAc...) asparagine). The active site involves D287. N-linked (GlcNAc...) asparagine glycans are attached at residues N322, N329, N361, N449, N530, N549, N571, N675, and N719.

It belongs to the glycosyl hydrolase 3 family.

Its subcellular location is the secreted. It carries out the reaction Hydrolysis of terminal, non-reducing beta-D-glucosyl residues with release of beta-D-glucose.. Its pathway is glycan metabolism; cellulose degradation. Beta-glucosidases are one of a number of cellulolytic enzymes involved in the degradation of cellulosic biomass. Catalyzes the last step releasing glucose from the inhibitory cellobiose. The sequence is that of Probable beta-glucosidase A (bglA) from Aspergillus clavatus (strain ATCC 1007 / CBS 513.65 / DSM 816 / NCTC 3887 / NRRL 1 / QM 1276 / 107).